The following is a 146-amino-acid chain: Phospholipase A2 (146 aa).

The N-terminal stretch at 1–18 is a signal peptide; that stretch reads MAFLVFAFLTLMAVETYG. Intrachain disulfides connect cysteine 44–cysteine 137, cysteine 46–cysteine 62, cysteine 61–cysteine 117, cysteine 67–cysteine 144, cysteine 68–cysteine 110, cysteine 77–cysteine 103, and cysteine 95–cysteine 108. Residues tyrosine 45, glycine 47, and glycine 49 each contribute to the Ca(2+) site. Histidine 65 is an active-site residue. Aspartate 66 lines the Ca(2+) pocket. Asparagine 85 carries N-linked (GlcNAc...) asparagine glycosylation. The active site involves aspartate 111. A glycan (N-linked (GlcNAc...) asparagine) is linked at asparagine 126.

Requires Ca(2+) as cofactor. In terms of processing, N-glycosylated. Glycosylated with mannose chains including Man2(GlcNAc), Man2(GlcNAc)2, Man2(GlcNAc)3, Man2(GlcNAc)4 and Man2(GlcNAc)5. In terms of tissue distribution, expressed by the skin glands (at protein level).

The protein localises to the secreted. It carries out the reaction a 1,2-diacyl-sn-glycero-3-phosphocholine + H2O = a 1-acyl-sn-glycero-3-phosphocholine + a fatty acid + H(+). Functionally, PLA2 catalyzes the calcium-dependent hydrolysis of the 2-acyl groups in 3-sn-phosphoglycerides. This chain is Phospholipase A2, found in Pithecopus azureus (Orange-legged monkey tree frog).